A 330-amino-acid chain; its full sequence is Exostosin-like 2 (330 aa).

The Cytoplasmic portion of the chain corresponds to 1–22; it reads MRCCHICKLPGRVMGIRVLRLS. A helical; Signal-anchor for type II membrane protein transmembrane segment spans residues 23–43; it reads LVVILVLLLVAGALTALLPSV. Residues 44–330 lie on the Lumenal side of the membrane; sequence KEDKMLMLRR…FPYANYKRKI (287 aa). A UDP-N-acetyl-alpha-D-galactosamine-binding site is contributed by Gln-71. Gln-71 serves as a coordination point for UDP-N-acetyl-alpha-D-glucosamine. N-linked (GlcNAc...) asparagine glycosylation is present at Asn-74. Arg-75, Asn-100, Asn-129, Arg-134, Asp-150, Asp-151, Asp-152, and Asp-244 together coordinate UDP-N-acetyl-alpha-D-galactosamine. UDP-N-acetyl-alpha-D-glucosamine is bound by residues Arg-75, Asn-100, Asn-129, Arg-134, Asp-150, Asp-151, Asp-152, Asp-244, Asp-245, and Arg-293. Asp-152 contacts Mn(2+). A disulfide bridge connects residues Cys-243 and Cys-296. Asp-245 is an active-site residue. Arg-293 contributes to the UDP-N-acetyl-alpha-D-galactosamine binding site.

Belongs to the glycosyltransferase 47 family. The cofactor is Mn(2+). The soluble form derives from the membrane form by proteolytic processing. Ubiquitous.

Its subcellular location is the endoplasmic reticulum membrane. It is found in the secreted. The enzyme catalyses 3-O-(beta-D-GlcA-(1-&gt;3)-beta-D-Gal-(1-&gt;3)-beta-D-Gal-(1-&gt;4)-beta-D-Xyl)-L-seryl-[protein] + UDP-N-acetyl-alpha-D-glucosamine = 3-O-(alpha-D-GlcNAc-(1-&gt;4)-beta-D-GlcA-(1-&gt;3)-beta-D-Gal-(1-&gt;3)-beta-D-Gal-(1-&gt;4)-beta-D-Xyl)-L-seryl-[protein] + UDP + H(+). It functions in the pathway glycan metabolism; heparan sulfate biosynthesis. Functionally, glycosyltransferase required for the biosynthesis of heparan-sulfate and responsible for the alternating addition of beta-1-4-linked glucuronic acid (GlcA) and alpha-1-4-linked N-acetylglucosamine (GlcNAc) units to nascent heparan sulfate chains. The protein is Exostosin-like 2 (EXTL2) of Homo sapiens (Human).